Here is a 282-residue protein sequence, read N- to C-terminus: 2-dehydro-3-deoxyphosphooctonate aldolase (282 aa).

The protein belongs to the KdsA family.

It localises to the cytoplasm. It carries out the reaction D-arabinose 5-phosphate + phosphoenolpyruvate + H2O = 3-deoxy-alpha-D-manno-2-octulosonate-8-phosphate + phosphate. It participates in carbohydrate biosynthesis; 3-deoxy-D-manno-octulosonate biosynthesis; 3-deoxy-D-manno-octulosonate from D-ribulose 5-phosphate: step 2/3. The protein operates within bacterial outer membrane biogenesis; lipopolysaccharide biosynthesis. The protein is 2-dehydro-3-deoxyphosphooctonate aldolase of Agrobacterium fabrum (strain C58 / ATCC 33970) (Agrobacterium tumefaciens (strain C58)).